The primary structure comprises 102 residues: Large ribosomal subunit protein bL21 (102 aa).

The protein belongs to the bacterial ribosomal protein bL21 family. In terms of assembly, part of the 50S ribosomal subunit. Contacts protein L20.

Its function is as follows. This protein binds to 23S rRNA in the presence of protein L20. The polypeptide is Large ribosomal subunit protein bL21 (Oceanobacillus iheyensis (strain DSM 14371 / CIP 107618 / JCM 11309 / KCTC 3954 / HTE831)).